The following is a 200-amino-acid chain: Probable nicotinate-nucleotide adenylyltransferase (200 aa).

This sequence belongs to the NadD family.

The enzyme catalyses nicotinate beta-D-ribonucleotide + ATP + H(+) = deamido-NAD(+) + diphosphate. Its pathway is cofactor biosynthesis; NAD(+) biosynthesis; deamido-NAD(+) from nicotinate D-ribonucleotide: step 1/1. In terms of biological role, catalyzes the reversible adenylation of nicotinate mononucleotide (NaMN) to nicotinic acid adenine dinucleotide (NaAD). This is Probable nicotinate-nucleotide adenylyltransferase from Clostridium acetobutylicum (strain ATCC 824 / DSM 792 / JCM 1419 / IAM 19013 / LMG 5710 / NBRC 13948 / NRRL B-527 / VKM B-1787 / 2291 / W).